The sequence spans 356 residues: S-adenosylmethionine:tRNA ribosyltransferase-isomerase (356 aa).

This sequence belongs to the QueA family. As to quaternary structure, monomer.

The protein localises to the cytoplasm. It carries out the reaction 7-aminomethyl-7-carbaguanosine(34) in tRNA + S-adenosyl-L-methionine = epoxyqueuosine(34) in tRNA + adenine + L-methionine + 2 H(+). Its pathway is tRNA modification; tRNA-queuosine biosynthesis. Transfers and isomerizes the ribose moiety from AdoMet to the 7-aminomethyl group of 7-deazaguanine (preQ1-tRNA) to give epoxyqueuosine (oQ-tRNA). This is S-adenosylmethionine:tRNA ribosyltransferase-isomerase from Escherichia coli O6:K15:H31 (strain 536 / UPEC).